The sequence spans 588 residues: Calicin (588 aa).

Positions 28–98 (WDMALTVDHH…FYSGKVVISE (71 aa)) constitute a BTB domain. The region spanning 133–235 (CLRYLFLAEL…NAVSNKTLMF (103 aa)) is the BACK domain. Phosphoserine is present on Ser149. Kelch repeat units lie at residues 280–327 (SVVI…AAGR), 328–375 (YIYI…TCGG), 377–423 (VYSV…TKGD), 425–475 (NLYI…SFHQ), 476–525 (DNIL…IGDS), and 526–580 (KVFV…LAKL).

In terms of assembly, interacts with CYLC1; the interaction may be relevant for proper acrosome attachment to the nuclear envelope. In terms of tissue distribution, expressed in testis and in spermatozoa.

It is found in the cytoplasm. It localises to the cytoskeleton. The protein resides in the perinuclear theca. The protein localises to the calyx. Required for both nuclear and acrosomal shaping during spermiogenesis. The chain is Calicin (Ccin) from Mus musculus (Mouse).